The sequence spans 238 residues: Ribonuclease PH (238 aa).

Phosphate contacts are provided by residues arginine 86 and 124 to 126 (GTR).

It belongs to the RNase PH family. In terms of assembly, homohexameric ring arranged as a trimer of dimers.

It carries out the reaction tRNA(n+1) + phosphate = tRNA(n) + a ribonucleoside 5'-diphosphate. Phosphorolytic 3'-5' exoribonuclease that plays an important role in tRNA 3'-end maturation. Removes nucleotide residues following the 3'-CCA terminus of tRNAs; can also add nucleotides to the ends of RNA molecules by using nucleoside diphosphates as substrates, but this may not be physiologically important. Probably plays a role in initiation of 16S rRNA degradation (leading to ribosome degradation) during starvation. The protein is Ribonuclease PH of Solibacter usitatus (strain Ellin6076).